The sequence spans 807 residues: Glycerol-3-phosphate acyltransferase (807 aa).

Positions 308 to 313 (CHRSHM) match the HXXXXD motif motif.

It belongs to the GPAT/DAPAT family.

It localises to the cell inner membrane. The enzyme catalyses sn-glycerol 3-phosphate + an acyl-CoA = a 1-acyl-sn-glycero-3-phosphate + CoA. The protein operates within phospholipid metabolism; CDP-diacylglycerol biosynthesis; CDP-diacylglycerol from sn-glycerol 3-phosphate: step 1/3. The sequence is that of Glycerol-3-phosphate acyltransferase from Shewanella sp. (strain W3-18-1).